The chain runs to 135 residues: Small ribosomal subunit protein bS6 (135 aa).

The disordered stretch occupies residues 104–135; that stretch reads FSRLDRNGHIGHDEKHPRSPSRQREDVIEGVE.

The protein belongs to the bacterial ribosomal protein bS6 family.

In terms of biological role, binds together with bS18 to 16S ribosomal RNA. This is Small ribosomal subunit protein bS6 from Bartonella henselae (strain ATCC 49882 / DSM 28221 / CCUG 30454 / Houston 1) (Rochalimaea henselae).